We begin with the raw amino-acid sequence, 191 residues long: MKKQLLAALIGGSLLAPMAASAADYVIDREGAHASITFKVSHLGYSYVVGRFNDFSGDFSYDAKNPTAAKVNVKVNTLSVDSNHAERDKHIRSGDFLNTAKFAEATFVSTSVEDKGNGDMVITGNFTLNGVTKPLAIQAHAVGEGQDPWGGYRAGFTGTTTFAMKDYGIKMDLGPASANVELDLVVEGVRK.

The signal sequence occupies residues 1–22 (MKKQLLAALIGGSLLAPMAASA).

The protein belongs to the UPF0312 family. Type 1 subfamily.

It is found in the periplasm. The polypeptide is UPF0312 protein Shewana3_1179 (Shewanella sp. (strain ANA-3)).